The following is a 94-amino-acid chain: Large ribosomal subunit protein uL23 (94 aa).

Belongs to the universal ribosomal protein uL23 family. In terms of assembly, part of the 50S ribosomal subunit. Contacts protein L29, and trigger factor when it is bound to the ribosome.

Functionally, one of the early assembly proteins it binds 23S rRNA. One of the proteins that surrounds the polypeptide exit tunnel on the outside of the ribosome. Forms the main docking site for trigger factor binding to the ribosome. The chain is Large ribosomal subunit protein uL23 from Treponema denticola (strain ATCC 35405 / DSM 14222 / CIP 103919 / JCM 8153 / KCTC 15104).